A 193-amino-acid polypeptide reads, in one-letter code: dCTP deaminase (193 aa).

DCTP is bound by residues 110–115 (RSSLAR), aspartate 128, 136–138 (VLE), tyrosine 171, lysine 178, and glutamine 182. The active-site Proton donor/acceptor is glutamate 138. Positions 169–193 (RPYNRRQDAKYKDQQGAVASRIDKD) are disordered.

It belongs to the dCTP deaminase family. In terms of assembly, homotrimer.

It catalyses the reaction dCTP + H2O + H(+) = dUTP + NH4(+). The protein operates within pyrimidine metabolism; dUMP biosynthesis; dUMP from dCTP (dUTP route): step 1/2. Catalyzes the deamination of dCTP to dUTP. In Pectobacterium atrosepticum (strain SCRI 1043 / ATCC BAA-672) (Erwinia carotovora subsp. atroseptica), this protein is dCTP deaminase.